An 823-amino-acid chain; its full sequence is High affinity cAMP-specific and IBMX-insensitive 3',5'-cyclic phosphodiesterase 8A (823 aa).

Residues 1 to 55 are disordered; it reads MGCAPSIHTSENRTFSHSDGEDEDVDVDVPGPAPRSIQRWSTAPGLVEPQPRDNG. Basic and acidic residues predominate over residues 10–19; it reads SENRTFSHSD. In terms of domain architecture, PAS spans 209 to 280; the sequence is ACNSVFTALE…AINSCVTVDK (72 aa). The 43-residue stretch at 283–325 folds into the PAC domain; sequence QGVYHTQKKNGDNIQQNVKIIPVIGQGGKIRHYVSIIRVCNGN. The segment at 338 to 373 is disordered; that stretch reads DSQTDNQAGKHKDRRKHSMDAKAVSSRTSDVSSQRR. Ser-355 carries the phosphoserine; by PKA modification. Phosphoserine occurs at positions 382 and 452. Tyr-456 carries the post-translational modification Phosphotyrosine. The 340-residue stretch at 475–814 folds into the PDEase domain; the sequence is SLHDVPPRIA…RYWKGLDEKK (340 aa). The active-site Proton donor is the His-551. 4 residues coordinate a divalent metal cation: His-555, His-591, Asp-592, and Asp-720.

Belongs to the cyclic nucleotide phosphodiesterase family. PDE8 subfamily. Interacts with RAF1. The interaction promotes RAF1 activity. A divalent metal cation serves as cofactor. Phosphorylated at Ser-355 by PKA under elevated cAMP conditions, this enhances catalytic activity. As to expression, expressed in multiple tissues, with highest levels in testis, followed by liver, heart, skeletal muscle, and kidney. In the testis, expressed specifically in the seminiferous tubules, in postmitotic pachytene spermatocytes. Low expression, if any, in lung, smooth muscle, pancreas, thyroid, thymus, submaxillary gland, spleen, prostate, epididymus, uterus.

The enzyme catalyses 3',5'-cyclic AMP + H2O = AMP + H(+). The protein operates within purine metabolism; 3',5'-cyclic AMP degradation; AMP from 3',5'-cyclic AMP: step 1/1. Its activity is regulated as follows. Inhibited by dipyridimole. Insensitive to selective PDE inhibitor rolipram and to the non-selective inhibitor, IBMX. In terms of biological role, hydrolyzes the second messenger cAMP, which is a key regulator of many important physiological processes. May be involved in maintaining basal levels of the cyclic nucleotide and/or in the cAMP regulation of germ cell development. Binding to RAF1 reduces RAF1 'Ser-259' inhibitory-phosphorylation and stimulates RAF1-dependent EGF-activated ERK-signaling. Protects against cell death induced by hydrogen peroxide and staurosporine. The polypeptide is High affinity cAMP-specific and IBMX-insensitive 3',5'-cyclic phosphodiesterase 8A (Pde8a) (Mus musculus (Mouse)).